We begin with the raw amino-acid sequence, 460 residues long: Cysteine proteinase 7 (460 aa).

An N-terminal signal peptide occupies residues 1–17; the sequence is MKVLSALCVLLVSVATA. Residues 18 to 111 constitute a propeptide, activation peptide; sequence KQQLSEVEYR…TESDKIFDAS (94 aa). Disulfide bonds link Cys-131–Cys-176 and Cys-167–Cys-210. Residue Cys-134 is part of the active site. Residues Asn-226 and Asn-252 are each glycosylated (N-linked (GlcNAc...) asparagine). Cys-268 and Cys-445 are oxidised to a cystine. The active site involves His-275. The tract at residues 285–409 is disordered; that stretch reads GSGSSGSHGG…GSSSGSNSNG (125 aa). Over residues 294–359 the composition is skewed to low complexity; sequence GSQSQSAGSD…QSGSQSGNSG (66 aa). Residues 367–385 are compositionally biased toward gly residues; the sequence is AGSGSGSGSGSGSGSGSGS. Residues 386-409 show a composition bias toward low complexity; sequence VSGSASGSASGSASGSSSGSNSNG. Residue Asn-423 is part of the active site.

This sequence belongs to the peptidase C1 family. Post-translationally, glycosylated; contains GlcNAc-alpha-1-P-Ser residues. Also N-glycosylated.

Its subcellular location is the lysosome. In Dictyostelium discoideum (Social amoeba), this protein is Cysteine proteinase 7 (cprG).